A 370-amino-acid polypeptide reads, in one-letter code: Dual-specificity RNA methyltransferase RlmN (370 aa).

E93 serves as the catalytic Proton acceptor. Positions E99 to D337 constitute a Radical SAM core domain. A disulfide bridge connects residues C106 and C343. 3 residues coordinate [4Fe-4S] cluster: C113, C117, and C120. S-adenosyl-L-methionine-binding positions include G167–E168, S199, S221–H223, and N300. C343 (S-methylcysteine intermediate) is an active-site residue.

Belongs to the radical SAM superfamily. RlmN family. Requires [4Fe-4S] cluster as cofactor.

Its subcellular location is the cytoplasm. The catalysed reaction is adenosine(2503) in 23S rRNA + 2 reduced [2Fe-2S]-[ferredoxin] + 2 S-adenosyl-L-methionine = 2-methyladenosine(2503) in 23S rRNA + 5'-deoxyadenosine + L-methionine + 2 oxidized [2Fe-2S]-[ferredoxin] + S-adenosyl-L-homocysteine. The enzyme catalyses adenosine(37) in tRNA + 2 reduced [2Fe-2S]-[ferredoxin] + 2 S-adenosyl-L-methionine = 2-methyladenosine(37) in tRNA + 5'-deoxyadenosine + L-methionine + 2 oxidized [2Fe-2S]-[ferredoxin] + S-adenosyl-L-homocysteine. Its function is as follows. Specifically methylates position 2 of adenine 2503 in 23S rRNA and position 2 of adenine 37 in tRNAs. m2A2503 modification seems to play a crucial role in the proofreading step occurring at the peptidyl transferase center and thus would serve to optimize ribosomal fidelity. The polypeptide is Dual-specificity RNA methyltransferase RlmN (Francisella tularensis subsp. mediasiatica (strain FSC147)).